Reading from the N-terminus, the 955-residue chain is Glycine dehydrogenase (decarboxylating) (955 aa).

Position 705 is an N6-(pyridoxal phosphate)lysine (Lys705).

The protein belongs to the GcvP family. In terms of assembly, the glycine cleavage system is composed of four proteins: P, T, L and H. The cofactor is pyridoxal 5'-phosphate.

It carries out the reaction N(6)-[(R)-lipoyl]-L-lysyl-[glycine-cleavage complex H protein] + glycine + H(+) = N(6)-[(R)-S(8)-aminomethyldihydrolipoyl]-L-lysyl-[glycine-cleavage complex H protein] + CO2. The glycine cleavage system catalyzes the degradation of glycine. The P protein binds the alpha-amino group of glycine through its pyridoxal phosphate cofactor; CO(2) is released and the remaining methylamine moiety is then transferred to the lipoamide cofactor of the H protein. This chain is Glycine dehydrogenase (decarboxylating), found in Aliivibrio fischeri (strain ATCC 700601 / ES114) (Vibrio fischeri).